We begin with the raw amino-acid sequence, 462 residues long: A-type ATP synthase subunit B (462 aa).

It belongs to the ATPase alpha/beta chains family. As to quaternary structure, has multiple subunits with at least A(3), B(3), C, D, E, F, H, I and proteolipid K(x).

It localises to the cell membrane. Functionally, component of the A-type ATP synthase that produces ATP from ADP in the presence of a proton gradient across the membrane. The B chain is a regulatory subunit. This Methanobrevibacter smithii (strain ATCC 35061 / DSM 861 / OCM 144 / PS) protein is A-type ATP synthase subunit B.